A 334-amino-acid chain; its full sequence is 2,3-bisphosphoglycerate-dependent phosphoglycerate mutase 1 (334 aa).

Residues 1–48 constitute a chloroplast transit peptide; the sequence is MATATSHQSVVSFASLRSSPSSTISQCGFKIDSSLSFTSKKTNFCKIK. Substrate is bound by residues 84–91, 97–98, arginine 134, 188–191, lysine 199, 215–216, and 259–260; these read RHGESLWN, TG, ERMY, RR, and GN. Catalysis depends on histidine 85, which acts as the Tele-phosphohistidine intermediate. The active-site Proton donor/acceptor is glutamate 188.

Belongs to the phosphoglycerate mutase family. BPG-dependent PGAM subfamily.

The protein resides in the plastid. Its subcellular location is the chloroplast. It carries out the reaction (2R)-2-phosphoglycerate = (2R)-3-phosphoglycerate. It functions in the pathway carbohydrate degradation; glycolysis; pyruvate from D-glyceraldehyde 3-phosphate: step 3/5. Functionally, catalyzes the interconversion of 2-phosphoglycerate and 3-phosphoglycerate. This chain is 2,3-bisphosphoglycerate-dependent phosphoglycerate mutase 1, found in Arabidopsis thaliana (Mouse-ear cress).